A 251-amino-acid chain; its full sequence is Pyridoxine 5'-phosphate synthase (251 aa).

A 3-amino-2-oxopropyl phosphate-binding site is contributed by asparagine 7. 9–10 contacts 1-deoxy-D-xylulose 5-phosphate; it reads DH. Arginine 18 lines the 3-amino-2-oxopropyl phosphate pocket. Histidine 43 acts as the Proton acceptor in catalysis. Residues arginine 45 and histidine 50 each coordinate 1-deoxy-D-xylulose 5-phosphate. Catalysis depends on glutamate 70, which acts as the Proton acceptor. Threonine 100 provides a ligand contact to 1-deoxy-D-xylulose 5-phosphate. Histidine 198 (proton donor) is an active-site residue. Residues alanine 199 and 220–221 contribute to the 3-amino-2-oxopropyl phosphate site; that span reads GH.

It belongs to the PNP synthase family. Homooctamer; tetramer of dimers.

Its subcellular location is the cytoplasm. It catalyses the reaction 3-amino-2-oxopropyl phosphate + 1-deoxy-D-xylulose 5-phosphate = pyridoxine 5'-phosphate + phosphate + 2 H2O + H(+). Its pathway is cofactor biosynthesis; pyridoxine 5'-phosphate biosynthesis; pyridoxine 5'-phosphate from D-erythrose 4-phosphate: step 5/5. Catalyzes the complicated ring closure reaction between the two acyclic compounds 1-deoxy-D-xylulose-5-phosphate (DXP) and 3-amino-2-oxopropyl phosphate (1-amino-acetone-3-phosphate or AAP) to form pyridoxine 5'-phosphate (PNP) and inorganic phosphate. The chain is Pyridoxine 5'-phosphate synthase from Dechloromonas aromatica (strain RCB).